Reading from the N-terminus, the 1118-residue chain is Protein SUPPRESSOR OF NPR1-1 CONSTITUTIVE 4 (1118 aa).

The signal sequence occupies residues 1–35 (MNSQQSTRTKQMLQQSSTHLLCGVVLLQLFAAQVD). Topologically, residues 36-751 (AQRSTSPWQT…PLRNFLKVIR (716 aa)) are extracellular. Positions 51–353 (PLVIARGGFS…DFPLTASASV (303 aa)) constitute a GP-PDE 1 domain. Residues Asn-106, Asn-195, Asn-251, Asn-260, Asn-318, Asn-335, Asn-362, Asn-422, Asn-433, Asn-497, Asn-557, Asn-573, and Asn-656 are each glycosylated (N-linked (GlcNAc...) asparagine). Residues 369-670 (FLVISKNGAS…EFPYTAARYK (302 aa)) form the GP-PDE 2 domain. Residues 752-772 (IVSWSVAGVVLFLVLLTLVFC) form a helical membrane-spanning segment. Topologically, residues 773–1118 (FHRKRETRLR…SEDVSVYTEG (346 aa)) are cytoplasmic. The Protein kinase domain maps to 805-1094 (KSFAEVVGRG…ALEVPPRPVL (290 aa)). Residues 811-819 (VGRGGFGIV) and Lys-833 each bind ATP. The active-site Proton acceptor is Asp-928.

The protein in the N-terminal section; belongs to the glycerophosphoryl diester phosphodiesterase family. It in the C-terminal section; belongs to the protein kinase superfamily. Ser/Thr protein kinase family. Expressed in shoots, rosette and cauline leaves, stems, flowers and siliques.

The protein localises to the cell membrane. The enzyme catalyses a sn-glycero-3-phosphodiester + H2O = an alcohol + sn-glycerol 3-phosphate + H(+). It carries out the reaction L-seryl-[protein] + ATP = O-phospho-L-seryl-[protein] + ADP + H(+). The catalysed reaction is L-threonyl-[protein] + ATP = O-phospho-L-threonyl-[protein] + ADP + H(+). Its function is as follows. Atypical receptor-like kinase involved in disease resistance. The sequence is that of Protein SUPPRESSOR OF NPR1-1 CONSTITUTIVE 4 from Arabidopsis thaliana (Mouse-ear cress).